We begin with the raw amino-acid sequence, 306 residues long: Ribokinase (306 aa).

Substrate is bound by residues 12-14 (NAD), 40-44 (GKGAN), and Glu-141. Residues Asn-185 and 221 to 226 (TLGAKG) each bind ATP. Asp-247 and Thr-249 together coordinate K(+). 252–253 (GD) provides a ligand contact to ATP. Asp-253 provides a ligand contact to substrate. Asp-253 functions as the Proton acceptor in the catalytic mechanism. Positions 283, 286, 288, and 292 each coordinate K(+).

It belongs to the carbohydrate kinase PfkB family. Ribokinase subfamily. Homodimer. Mg(2+) is required as a cofactor.

Its subcellular location is the cytoplasm. The catalysed reaction is D-ribose + ATP = D-ribose 5-phosphate + ADP + H(+). It functions in the pathway carbohydrate metabolism; D-ribose degradation; D-ribose 5-phosphate from beta-D-ribopyranose: step 2/2. With respect to regulation, activated by a monovalent cation that binds near, but not in, the active site. The most likely occupant of the site in vivo is potassium. Ion binding induces a conformational change that may alter substrate affinity. Catalyzes the phosphorylation of ribose at O-5 in a reaction requiring ATP and magnesium. The resulting D-ribose-5-phosphate can then be used either for sythesis of nucleotides, histidine, and tryptophan, or as a component of the pentose phosphate pathway. The protein is Ribokinase of Haemophilus influenzae (strain ATCC 51907 / DSM 11121 / KW20 / Rd).